A 321-amino-acid chain; its full sequence is Biotin synthase (321 aa).

One can recognise a Radical SAM core domain in the interval 37–264; that stretch reads RDMELCTLSS…TSVIRLSAGR (228 aa). Residues cysteine 52, cysteine 56, and cysteine 59 each contribute to the [4Fe-4S] cluster site. [2Fe-2S] cluster-binding residues include cysteine 96, cysteine 127, cysteine 187, and arginine 259.

Belongs to the radical SAM superfamily. Biotin synthase family. As to quaternary structure, homodimer. [4Fe-4S] cluster is required as a cofactor. It depends on [2Fe-2S] cluster as a cofactor.

It catalyses the reaction (4R,5S)-dethiobiotin + (sulfur carrier)-SH + 2 reduced [2Fe-2S]-[ferredoxin] + 2 S-adenosyl-L-methionine = (sulfur carrier)-H + biotin + 2 5'-deoxyadenosine + 2 L-methionine + 2 oxidized [2Fe-2S]-[ferredoxin]. It functions in the pathway cofactor biosynthesis; biotin biosynthesis; biotin from 7,8-diaminononanoate: step 2/2. Its function is as follows. Catalyzes the conversion of dethiobiotin (DTB) to biotin by the insertion of a sulfur atom into dethiobiotin via a radical-based mechanism. This is Biotin synthase from Coxiella burnetii (strain CbuK_Q154) (Coxiella burnetii (strain Q154)).